A 224-amino-acid polypeptide reads, in one-letter code: Superoxide dismutase [Mn], mitochondrial (224 aa).

The transit peptide at methionine 1 to glutamine 20 directs the protein to the mitochondrion. Mn(2+) contacts are provided by histidine 46, histidine 94, aspartate 177, and histidine 181.

This sequence belongs to the iron/manganese superoxide dismutase family. Homotetramer. Requires Mn(2+) as cofactor.

The protein localises to the mitochondrion matrix. It carries out the reaction 2 superoxide + 2 H(+) = H2O2 + O2. Destroys superoxide anion radicals which are normally produced within the cells and which are toxic to biological systems. This is Superoxide dismutase [Mn], mitochondrial from Charybdis feriata (Crucifix crab).